Here is a 78-residue protein sequence, read N- to C-terminus: Calcium/calmodulin-dependent protein kinase II inhibitor 1 (78 aa).

The segment at 41 to 68 is CAMK2 inhibitory domain; the sequence is SKRPPKLGQIGRSKRVVIEDDRIDDVLK.

It belongs to the CAMK2N family. Interacts with CAMK2B; the presence of Ca(2+)/calmodulin increases the interaction but is not essential. Interacts with CAMK2A; this interaction requires CAMK2A activation by Ca(2+). As to expression, expressed in the brain (at protein level). Expressed in cardiomyocytes but not cardiac fibroblasts (at protein level).

Its subcellular location is the synapse. The protein localises to the cell projection. It is found in the dendrite. It localises to the postsynaptic density. In terms of biological role, potent and specific inhibitor of CaM-kinase II (CAMK2). Plays a role in the maintenance of long-term retrieval-induced memory in response to contextual fear. Modulates blood pressure and vascular reactivity via regulation of CAMK2 activity in addition to regulation of left ventricular mass. Mediates the NLRP3 inflammasome in cardiomyocytes via acting as an inhibitor of the MAPK14/p38 and MAPK8/JNK pathways, thereby regulating ventricular remodeling and cardiac rhythm post-myocardial infarction. Negatively effects insulin sensitivity and promotes lipid formation in adipose tissues independent of CAMK2 signaling. The sequence is that of Calcium/calmodulin-dependent protein kinase II inhibitor 1 (Camk2n1) from Mus musculus (Mouse).